We begin with the raw amino-acid sequence, 483 residues long: (R)-mandelonitrile beta-glucosyltransferase (483 aa).

The Proton acceptor role is filled by H22. H22 is a binding site for an anthocyanidin. D124 serves as the catalytic Charge relay. Residues T146, Q363, H378, W381, N382, S383, and E386 each coordinate UDP-alpha-D-glucose. A401 contributes to the an anthocyanidin binding site. UDP-alpha-D-glucose-binding residues include E402 and Q403.

The protein belongs to the UDP-glycosyltransferase family.

The enzyme catalyses (R)-mandelonitrile + UDP-alpha-D-glucose = (R)-prunasin + UDP + H(+). Involved in the biosynthesis of the cyanogenic glycoside (R)-prunasin, a precursor of (R)-amygdalin, which at high concentrations is associated with intense bitterness in kernels of almond. Stereo-selectively glucosylates (R)-mandelonitrile to produce (R)-prunasin. This chain is (R)-mandelonitrile beta-glucosyltransferase, found in Prunus dulcis (Almond).